Here is an 84-residue protein sequence, read N- to C-terminus: Acyl-CoA-binding protein (84 aa).

The ACB domain occupies 1–84 (MTTFEEAAQK…LYEQLATKYA (84 aa)). An acyl-CoA-binding positions include Lys-12, 27 to 31 (YGLYK), Lys-53, and Tyr-72.

Belongs to the ACBP family. In terms of assembly, interacts with dhkA.

In terms of biological role, binds to acyl-CoA. Processed into the SDF-2 (spore differentiation factor 2) a peptide which triggers sporulation. SDF-2 appears to stimulate prestalk cells to release additional SDF-2 by acting through a signal transduction pathway that also involves dhkA, regA and PKA. Induces encapsulation of prespore cells in a dhkA-dependent manner. GABA induces the release of acbA from prespore cells and induces the exposure of tagC on the surface of prestalk cells where it can convert acbA to SDF-2. Glutamate acts as a competitive inhibitor and is also able to inhibit induction of sporulation by SDF-2. This is Acyl-CoA-binding protein (acbA) from Dictyostelium discoideum (Social amoeba).